A 505-amino-acid chain; its full sequence is 2,3-bisphosphoglycerate-independent phosphoglycerate mutase (505 aa).

Mn(2+)-binding residues include D11 and S61. S61 serves as the catalytic Phosphoserine intermediate. Residues H122, 152 to 153, R184, R190, 258 to 261, and K331 each bind substrate; these read RD and RPDR. Mn(2+) is bound by residues D396, H400, D437, H438, and H455.

The protein belongs to the BPG-independent phosphoglycerate mutase family. In terms of assembly, monomer. Mn(2+) is required as a cofactor.

The catalysed reaction is (2R)-2-phosphoglycerate = (2R)-3-phosphoglycerate. It participates in carbohydrate degradation; glycolysis; pyruvate from D-glyceraldehyde 3-phosphate: step 3/5. Functionally, catalyzes the interconversion of 2-phosphoglycerate and 3-phosphoglycerate. This chain is 2,3-bisphosphoglycerate-independent phosphoglycerate mutase, found in Mesomycoplasma hyopneumoniae (strain 7448) (Mycoplasma hyopneumoniae).